The sequence spans 916 residues: MEMPLPPDDQELRNVIDKLAQFVARNGPEFEKMTMEKQKDNPKFSFLFGGEFYSYYKCKLALEQQQLICKQQTPELEPAATMPPLPQPPLAPAAPIPPAQGAPSMDELIQQSQWNLQQQEQHLLALRQEQVTAAVAHAVEQQMQKLLEETQLDMNEFDNLLQPIIDTCTKDAISAGKNWMFSNAKSPPHCELMAGHLRNRITADGAHFELRLHLIYLINDVLHHCQRKQARELLAALQKVVVPIYCTSFLAVEEDKQQKIARLLQLWEKNGYFDDSIIQQLQSPALGLGQYQATLINEYSSVVQPVQLAFQQQIQTLKTQHEEFVTSLAQQQQQQQQQQQQLQMPQMEAEVKATPPPPAPPPAPAPAPAIPPTTQPDDSKPPIQMPGSSEYEAPGGVQDPAAAGPRGPGPHDQIPPNKPPWFDQPHPVAPWGQQQPPEQPPYPHHQGGPPHCPPWNNSHEGMWGEQRGDPGWNGQRDAPWNNQPDAAWNSQFEGPWNSQHEQPPWGGGQREPPFRMQRPPHFRGPFPPHQQHPQFNQPPHPHNFNRFPPRFMQDDFPPRHPFERPPYPHRFDYPQGDFPAEMGPPHHHPGHRMPHPGINEHPPWAGPQHPDFGPPPHGFNGQPPHMRRQGPPHINHDDPSLVPNVPYFDLPAGLMAPLVKLEDHEYKPLDPKDIRLPPPMPPSERLLAAVEAFYSPPSHDRPRNSEGWEQNGLYEFFRAKMRARRRKGQEKRNSGPSRSRSRSKSRGRSSSRSNSRSSKSSGSYSRSRSRSCSRSYSRSRSRSRSRSRSSRSRSRSQSRSRSKSYSPGRRRRSRSRSPTPPSSAGLGSNSAPPIPDSRLGEENKGHQMLVKMGWSGSGGLGAKEQGIQDPIKGGDVRDKWDQYKGVGVALDDPYENYRRNKSYSFIARMKARDECK.

Methionine 1 is subject to N-acetylmethionine. Residues 15–57 (VIDKLAQFVARNGPEFEKMTMEKQKDNPKFSFLFGGEFYSYYK) form an SURP motif repeat. Lysine 18 is subject to N6-acetyllysine. One can recognise a CID domain in the interval 149–289 (ETQLDMNEFD…QLQSPALGLG (141 aa)). Disordered stretches follow at residues 336–549 (QQQQ…RFPP) and 601–635 (HPPWAGPQHPDFGPPPHGFNGQPPHMRRQGPPHIN). Pro residues predominate over residues 354-374 (TPPPPAPPPAPAPAPAIPPTT). The span at 480 to 501 (WNNQPDAAWNSQFEGPWNSQHE) shows a compositional bias: polar residues. Over residues 525 to 541 (PFPPHQQHPQFNQPPHP) the composition is skewed to pro residues. A Phosphotyrosine modification is found at tyrosine 714. Positions 722–878 (RARRRKGQEK…DPIKGGDVRD (157 aa)) are disordered. The segment covering 739 to 749 (SRSRSKSRGRS) has biased composition (basic residues). Residues 750-766 (SSRSNSRSSKSSGSYSR) show a composition bias toward low complexity. Basic residues predominate over residues 767 to 815 (SRSRSCSRSYSRSRSRSRSRSRSSRSRSRSQSRSRSKSYSPGRRRRSRS). 3 positions are modified to phosphoserine: serine 813, serine 815, and serine 817. Threonine 819 carries the post-translational modification Phosphothreonine. The residue at position 828 (serine 828) is a Phosphoserine. The G-patch domain occupies 841 to 891 (EENKGHQMLVKMGWSGSGGLGAKEQGIQDPIKGGDVRDKWDQYKGVGVALD). Lysine 844 is covalently cross-linked (Glycyl lysine isopeptide (Lys-Gly) (interchain with G-Cter in SUMO2)). 2 positions are modified to phosphoserine: serine 855 and serine 857. Residue lysine 872 forms a Glycyl lysine isopeptide (Lys-Gly) (interchain with G-Cter in SUMO2) linkage. Lysine 879 is subject to N6-acetyllysine. Serine 904 is subject to Phosphoserine.

In terms of tissue distribution, expressed in brain, placenta, lung, liver, kidney, pancreas, cardiac and skeletal muscle, and in cultured HEL and Dami cells.

It localises to the cytoplasm. It is found in the perinuclear region. Its subcellular location is the endoplasmic reticulum. Its function is as follows. Involved in calcium homeostasis, growth and proliferation. This chain is Calcium homeostasis endoplasmic reticulum protein, found in Homo sapiens (Human).